We begin with the raw amino-acid sequence, 356 residues long: MAGLKLQAVTKSWDGKTQIIQPLTLDVADGEFIVMVGPSGCGKSTLLRMVAGLERVTSGDIWIDRKRVTEMEPKDRGIAMVFQNYALYPHMSVEENMAWGLKIRGMSKAHIEERVREAARILELDGLLKRRPRELSGGQRQRVAMGRAIVREPAVFLFDEPLSNLDAKLRVQMRLELQHLHRRLRTTSLYVTHDQVEAMTLAQRVMVMNKGVAEQIGTPVEVYEKPASRFVASFIGSPAMNLLDGVISASGDRFELPGGLALPIGADYRGHAGRNMTLGIRPEHIALSSQAEGGVPLTVDTLEFLGADNLAHGRWGDQKLVVRLAHQQRPAAGSTLWLHLPEHQRHLFDGETGQRV.

Residues 4 to 235 (LKLQAVTKSW…PASRFVASFI (232 aa)) enclose the ABC transporter domain. 37-44 (GPSGCGKS) contacts ATP.

It belongs to the ABC transporter superfamily. sn-glycerol-3-phosphate importer (TC 3.A.1.1.3) family. The complex is composed of two ATP-binding proteins (UgpC), two transmembrane proteins (UgpA and UgpE) and a solute-binding protein (UgpB).

It localises to the cell inner membrane. It catalyses the reaction sn-glycerol 3-phosphate(out) + ATP + H2O = sn-glycerol 3-phosphate(in) + ADP + phosphate + H(+). Its function is as follows. Part of the ABC transporter complex UgpBAEC involved in sn-glycerol-3-phosphate (G3P) import. Responsible for energy coupling to the transport system. The chain is sn-glycerol-3-phosphate import ATP-binding protein UgpC from Salmonella choleraesuis (strain SC-B67).